We begin with the raw amino-acid sequence, 62 residues long: uncharacterized protein (62 aa).

The interval 1–26 (MGELAASANHGHSPCYPERKGTPGDL) is disordered. The segment covering 17-26 (PERKGTPGDL) has biased composition (basic and acidic residues).

This is an uncharacterized protein from Homo sapiens (Human).